The following is a 314-amino-acid chain: tRNA pseudouridine synthase B (314 aa).

His-43 provides a ligand contact to substrate. Residue Asp-48 is the Nucleophile of the active site. Residues Tyr-76, Tyr-179, and Leu-200 each coordinate substrate.

The protein belongs to the pseudouridine synthase TruB family. Type 1 subfamily.

The enzyme catalyses uridine(55) in tRNA = pseudouridine(55) in tRNA. Responsible for synthesis of pseudouridine from uracil-55 in the psi GC loop of transfer RNAs. The polypeptide is tRNA pseudouridine synthase B (Enterobacter sp. (strain 638)).